We begin with the raw amino-acid sequence, 198 residues long: Recombination protein RecR (198 aa).

The segment at 57–72 (CSVCGNLTDEDPCAIC) adopts a C4-type zinc-finger fold. One can recognise a Toprim domain in the interval 80 to 175 (STILIVEDSR…KVTRLARGLA (96 aa)).

The protein belongs to the RecR family.

May play a role in DNA repair. It seems to be involved in an RecBC-independent recombinational process of DNA repair. It may act with RecF and RecO. This chain is Recombination protein RecR, found in Streptococcus sanguinis (strain SK36).